A 302-amino-acid polypeptide reads, in one-letter code: Elongation factor Ts (302 aa).

The tract at residues 80-83 is involved in Mg(2+) ion dislocation from EF-Tu; it reads TDFV.

The protein belongs to the EF-Ts family.

The protein resides in the cytoplasm. In terms of biological role, associates with the EF-Tu.GDP complex and induces the exchange of GDP to GTP. It remains bound to the aminoacyl-tRNA.EF-Tu.GTP complex up to the GTP hydrolysis stage on the ribosome. This chain is Elongation factor Ts, found in Gluconobacter oxydans (strain 621H) (Gluconobacter suboxydans).